Here is a 102-residue protein sequence, read N- to C-terminus: Small ribosomal subunit protein uS10 (102 aa).

Belongs to the universal ribosomal protein uS10 family. As to quaternary structure, part of the 30S ribosomal subunit.

In terms of biological role, involved in the binding of tRNA to the ribosomes. The protein is Small ribosomal subunit protein uS10 of Fervidobacterium nodosum (strain ATCC 35602 / DSM 5306 / Rt17-B1).